A 477-amino-acid chain; its full sequence is Glycogen synthase (477 aa).

Lys-15 is an ADP-alpha-D-glucose binding site.

This sequence belongs to the glycosyltransferase 1 family. Bacterial/plant glycogen synthase subfamily.

The enzyme catalyses [(1-&gt;4)-alpha-D-glucosyl](n) + ADP-alpha-D-glucose = [(1-&gt;4)-alpha-D-glucosyl](n+1) + ADP + H(+). The protein operates within glycan biosynthesis; glycogen biosynthesis. In terms of biological role, synthesizes alpha-1,4-glucan chains using ADP-glucose. The polypeptide is Glycogen synthase (Serratia proteamaculans (strain 568)).